We begin with the raw amino-acid sequence, 35 residues long: Potassium channel toxin (35 aa).

3 cysteine pairs are disulfide-bonded: Cys6-Cys25, Cys11-Cys30, and Cys15-Cys32.

Belongs to the short scorpion toxin superfamily. Potassium channel inhibitor family. Alpha-KTx 21 subfamily. Expressed by the venom gland.

The protein localises to the secreted. In terms of biological role, toxin that blocks voltage-gated potassium channels (Kv). In Tityus metuendus (Scorpion), this protein is Potassium channel toxin.